Reading from the N-terminus, the 122-residue chain is Large ribosomal subunit protein uL14 (122 aa).

It belongs to the universal ribosomal protein uL14 family. Part of the 50S ribosomal subunit. Forms a cluster with proteins L3 and L19. In the 70S ribosome, L14 and L19 interact and together make contacts with the 16S rRNA in bridges B5 and B8.

Functionally, binds to 23S rRNA. Forms part of two intersubunit bridges in the 70S ribosome. The polypeptide is Large ribosomal subunit protein uL14 (Synechococcus sp. (strain JA-2-3B'a(2-13)) (Cyanobacteria bacterium Yellowstone B-Prime)).